The following is a 377-amino-acid chain: Homoserine O-acetyltransferase (377 aa).

One can recognise an AB hydrolase-1 domain in the interval 48–347 (NVVLIEHALT…PVGHDAFLTE (300 aa)). Ser-143 functions as the Nucleophile in the catalytic mechanism. Arg-213 provides a ligand contact to substrate. Catalysis depends on residues Asp-311 and His-341. Residue Asp-342 participates in substrate binding.

This sequence belongs to the AB hydrolase superfamily. MetX family. In terms of assembly, homodimer.

The protein localises to the cytoplasm. It catalyses the reaction L-homoserine + acetyl-CoA = O-acetyl-L-homoserine + CoA. It functions in the pathway amino-acid biosynthesis; L-methionine biosynthesis via de novo pathway; O-acetyl-L-homoserine from L-homoserine: step 1/1. Functionally, transfers an acetyl group from acetyl-CoA to L-homoserine, forming acetyl-L-homoserine. The chain is Homoserine O-acetyltransferase from Corynebacterium glutamicum (strain ATCC 13032 / DSM 20300 / JCM 1318 / BCRC 11384 / CCUG 27702 / LMG 3730 / NBRC 12168 / NCIMB 10025 / NRRL B-2784 / 534).